A 342-amino-acid polypeptide reads, in one-letter code: Pyridoxal 4-dehydrogenase (342 aa).

Asp56 is an active-site residue. Tyr61 functions as the Proton donor in the catalytic mechanism. Residue Lys86 is part of the active site. 245–255 (GVFNSGILAAP) lines the NADP(+) pocket.

It belongs to the aldo/keto reductase family. Homodimer.

The catalysed reaction is pyridoxal + NAD(+) = 4-pyridoxolactone + NADH + H(+). Its pathway is cofactor degradation; B6 vitamer degradation; 4-pyridoxate from pyridoxal: step 1/2. The protein is Pyridoxal 4-dehydrogenase (pld1) of Microbacterium luteolum (Aureobacterium luteolum).